Consider the following 179-residue polypeptide: MKEKIISEINLDLVFQCNNFSQFSNKLKDTKTNLIFESIFWEKVFLSWINTILKNEDYELPNYIFDKKSFSLGLQIISNQEIASLNKKWMQKNGPTDVLSFPIISDESLNNLDHIELGDIFISLEMALEQSYEYKHSIYREMIWLASHGFLHLLGWEHNNEHDLENMLNFQEYLITRLD.

Residues H148, H152, and H158 each coordinate Zn(2+).

This sequence belongs to the endoribonuclease YbeY family. It depends on Zn(2+) as a cofactor.

Its subcellular location is the cytoplasm. In terms of biological role, single strand-specific metallo-endoribonuclease involved in late-stage 70S ribosome quality control and in maturation of the 3' terminus of the 16S rRNA. The polypeptide is Endoribonuclease YbeY (Prochlorococcus marinus (strain AS9601)).